Consider the following 188-residue polypeptide: Elongation factor P (188 aa).

The protein belongs to the elongation factor P family.

It is found in the cytoplasm. Its pathway is protein biosynthesis; polypeptide chain elongation. Functionally, involved in peptide bond synthesis. Stimulates efficient translation and peptide-bond synthesis on native or reconstituted 70S ribosomes in vitro. Probably functions indirectly by altering the affinity of the ribosome for aminoacyl-tRNA, thus increasing their reactivity as acceptors for peptidyl transferase. This is Elongation factor P from Cellvibrio japonicus (strain Ueda107) (Pseudomonas fluorescens subsp. cellulosa).